The primary structure comprises 457 residues: Cyclic dof factor 2 (457 aa).

A disordered region spans residues 1-130; sequence MADPAIKLFG…GGTACSQEGK (130 aa). A compositionally biased stretch (polar residues) spans 22-35; sequence DSSSSYTGFLTETQ. Acidic residues-rich tracts occupy residues 45 to 54 and 62 to 73; these read TGDDDDEEMG and EGDDVGDGGGES. 2 stretches are compositionally biased toward basic and acidic residues: residues 74–94 and 106–118; these read ETDK…RNES and EKTE…KTNE. The segment at 138-192 adopts a Dof-type zinc-finger fold; it reads LPCPRCNSMETKFCYYNNYNVNQPRHFCKKCQRYWTAGGTMRNVPVGAGRRKNKS. Zn(2+) is bound by residues Cys140, Cys143, Cys165, and Cys168. 2 disordered regions span residues 334-377 and 417-457; these read QPNS…KSKP and AFRS…HESS. Positions 337 to 346 are enriched in low complexity; that stretch reads SPSGSNPNSP.

In terms of assembly, interacts with ADO2 (via kelch repeats) and ADO3 (via kelch repeats). Expressed in the vasculature of cotyledons and hypocotyls, leaves and roots.

The protein resides in the nucleus. Its function is as follows. Transcription factor that binds specifically to a 5'-AA[AG]G-3' consensus core sequence. Regulates a photoperiodic flowering response. Transcriptional repressor of 'CONSTANS' expression. The stability of CDF2 is controlled by 'GIGANTEA' and redundantly by ADO3, ADO2 and/or ADO1. This Arabidopsis thaliana (Mouse-ear cress) protein is Cyclic dof factor 2 (CDF2).